The primary structure comprises 133 residues: Profilin-4 (133 aa).

Cysteines 13 and 117 form a disulfide. Residues Ala-83–Thr-99 carry the Involved in PIP2 interaction motif. Thr-113 bears the Phosphothreonine mark.

Belongs to the profilin family. In terms of assembly, occurs in many kinds of cells as a complex with monomeric actin in a 1:1 ratio. In terms of processing, phosphorylated by MAP kinases.

It is found in the cytoplasm. Its subcellular location is the cytoskeleton. Its function is as follows. Binds to actin and affects the structure of the cytoskeleton. At high concentrations, profilin prevents the polymerization of actin, whereas it enhances it at low concentrations. In Corylus avellana (European hazel), this protein is Profilin-4.